A 177-amino-acid chain; its full sequence is Large ribosomal subunit protein uL6 (177 aa).

This sequence belongs to the universal ribosomal protein uL6 family. As to quaternary structure, part of the 50S ribosomal subunit.

Functionally, this protein binds to the 23S rRNA, and is important in its secondary structure. It is located near the subunit interface in the base of the L7/L12 stalk, and near the tRNA binding site of the peptidyltransferase center. In Janthinobacterium sp. (strain Marseille) (Minibacterium massiliensis), this protein is Large ribosomal subunit protein uL6.